The sequence spans 286 residues: Pantothenate synthetase (286 aa).

Residue 30 to 37 (MGCFHQGH) coordinates ATP. Catalysis depends on histidine 37, which acts as the Proton donor. Glutamine 61 is a (R)-pantoate binding site. Glutamine 61 serves as a coordination point for beta-alanine. 147–150 (GEKD) is a binding site for ATP. Residue glutamine 153 coordinates (R)-pantoate. 184-187 (MSSR) contacts ATP.

It belongs to the pantothenate synthetase family. As to quaternary structure, homodimer.

It is found in the cytoplasm. The enzyme catalyses (R)-pantoate + beta-alanine + ATP = (R)-pantothenate + AMP + diphosphate + H(+). Its pathway is cofactor biosynthesis; (R)-pantothenate biosynthesis; (R)-pantothenate from (R)-pantoate and beta-alanine: step 1/1. In terms of biological role, catalyzes the condensation of pantoate with beta-alanine in an ATP-dependent reaction via a pantoyl-adenylate intermediate. The sequence is that of Pantothenate synthetase from Desulfotalea psychrophila (strain LSv54 / DSM 12343).